The following is a 1038-amino-acid chain: Inner tegument protein (1038 aa).

The interaction with large tegument protein stretch occupies residues 545–1038 (WGITPPVDVG…VPGNTSGSDP (494 aa)).

The protein belongs to the herpesviridae inner tegument protein family. In terms of assembly, interacts (via C-terminus) with the large tegument protein/LTP (via N-terminus).

It localises to the virion tegument. The protein localises to the host cytoplasm. Its subcellular location is the host nucleus. The protein resides in the host Golgi apparatus. It is found in the host trans-Golgi network. In terms of biological role, plays an essential role in cytoplasmic secondary envelopment during viral egress. Interacts with the capsid via the large tegument protein/LTP and participates in its transport to the host trans-Golgi network (TGN) where secondary envelopment occurs. Modulates tegumentation and capsid accumulation at the viral assembly complex. The chain is Inner tegument protein (21) from Homo sapiens (Human).